Here is a 406-residue protein sequence, read N- to C-terminus: Cysteine desulfurase (406 aa).

Lys-226 is modified (N6-(pyridoxal phosphate)lysine). Residue Cys-364 is the Cysteine persulfide intermediate of the active site.

Belongs to the class-V pyridoxal-phosphate-dependent aminotransferase family. Csd subfamily. As to quaternary structure, homodimer. Interacts with SufE and the SufBCD complex composed of SufB, SufC and SufD. The interaction with SufE is required to mediate the direct transfer of the sulfur atom from the S-sulfanylcysteine. Pyridoxal 5'-phosphate is required as a cofactor.

It localises to the cytoplasm. The enzyme catalyses (sulfur carrier)-H + L-cysteine = (sulfur carrier)-SH + L-alanine. It catalyses the reaction L-selenocysteine + AH2 = hydrogenselenide + L-alanine + A + H(+). Its pathway is cofactor biosynthesis; iron-sulfur cluster biosynthesis. In terms of biological role, cysteine desulfurases mobilize the sulfur from L-cysteine to yield L-alanine, an essential step in sulfur metabolism for biosynthesis of a variety of sulfur-containing biomolecules. Component of the suf operon, which is activated and required under specific conditions such as oxidative stress and iron limitation. Acts as a potent selenocysteine lyase in vitro, that mobilizes selenium from L-selenocysteine. Selenocysteine lyase activity is however unsure in vivo. The protein is Cysteine desulfurase of Escherichia fergusonii (strain ATCC 35469 / DSM 13698 / CCUG 18766 / IAM 14443 / JCM 21226 / LMG 7866 / NBRC 102419 / NCTC 12128 / CDC 0568-73).